We begin with the raw amino-acid sequence, 420 residues long: Transcription factor dbaG (420 aa).

Its subcellular location is the nucleus. Its function is as follows. Transcription factor that coregulates the expression of the gene cluster that mediates the biosynthesis of the antibiotic 2,4- dihydroxy-3-methyl-6-(2-oxopropyl)benzaldehyde (DHMBA) and its derivatives. Specifically positively regulates the expression of the FAD-dependent oxidoreductase dbaF. This is Transcription factor dbaG from Emericella nidulans (strain FGSC A4 / ATCC 38163 / CBS 112.46 / NRRL 194 / M139) (Aspergillus nidulans).